Consider the following 81-residue polypeptide: Apolipoprotein C-I, acidic form (81 aa).

The N-terminal stretch at 1 to 24 (MRLFLSLLVVVLSMVLKGPTPAQG) is a signal peptide.

This sequence belongs to the apolipoprotein C1 family.

It is found in the secreted. In Macaca fascicularis (Crab-eating macaque), this protein is Apolipoprotein C-I, acidic form (APOC1A).